The primary structure comprises 139 residues: Probable cytochrome b5 (139 aa).

A Cytochrome b5 heme-binding domain is found at 2–78; it reads SAEFTYQDVA…LEPLLVGTLK (77 aa). Positions 37 and 61 each coordinate heme. A helical membrane pass occupies residues 105–125; sequence GLGIGLYAVLVLGGLAGFAAY.

The protein belongs to the cytochrome b5 family.

The protein resides in the endoplasmic reticulum membrane. Its subcellular location is the microsome membrane. In terms of biological role, membrane bound hemoprotein which function as an electron carrier for several membrane bound oxygenases. The polypeptide is Probable cytochrome b5 (Neurospora crassa (strain ATCC 24698 / 74-OR23-1A / CBS 708.71 / DSM 1257 / FGSC 987)).